The chain runs to 135 residues: VapC ribonuclease aq_1901 (135 aa).

A PINc domain is found at 3 to 130 (LLDTTVLLDF…FKKLGFKTVN (128 aa)). Asp-5 is a binding site for Mg(2+).

It belongs to the PINc/VapC protein family. It depends on Mg(2+) as a cofactor.

Toxic component of a type II toxin-antitoxin (TA) system. An RNase. The polypeptide is VapC ribonuclease aq_1901 (Aquifex aeolicus (strain VF5)).